A 206-amino-acid chain; its full sequence is Small ribosomal subunit protein uS4 (206 aa).

Residues 96-156 (QRLDNVVYRM…EKSKTQARII (61 aa)) form the S4 RNA-binding domain.

Belongs to the universal ribosomal protein uS4 family. As to quaternary structure, part of the 30S ribosomal subunit. Contacts protein S5. The interaction surface between S4 and S5 is involved in control of translational fidelity.

One of the primary rRNA binding proteins, it binds directly to 16S rRNA where it nucleates assembly of the body of the 30S subunit. Its function is as follows. With S5 and S12 plays an important role in translational accuracy. The protein is Small ribosomal subunit protein uS4 of Pseudoalteromonas translucida (strain TAC 125).